A 451-amino-acid polypeptide reads, in one-letter code: Glycylpeptide N-tetradecanoyltransferase (451 aa).

Residues 34–37 (YKFW), 167–169 (LCV), and 175–179 (SKRLT) contribute to the tetradecanoyl-CoA site. Leu-451 acts as the Proton acceptor; via carboxylate in catalysis.

Belongs to the NMT family. Monomer.

It localises to the cytoplasm. It carries out the reaction N-terminal glycyl-[protein] + tetradecanoyl-CoA = N-tetradecanoylglycyl-[protein] + CoA + H(+). Adds a myristoyl group to the N-terminal glycine residue of certain cellular proteins. The sequence is that of Glycylpeptide N-tetradecanoyltransferase (NMT1) from Candida glabrata (strain ATCC 2001 / BCRC 20586 / JCM 3761 / NBRC 0622 / NRRL Y-65 / CBS 138) (Yeast).